The chain runs to 136 residues: Secreted RxLR effector protein 63 (136 aa).

The signal sequence occupies residues 1-21 (MQRFPYSLLLLLLSATNRSRR). A RxLR motif is present at residues 43–46 (RMLR).

Belongs to the RxLR effector family.

Its subcellular location is the secreted. The protein resides in the host nucleus. Its function is as follows. Effector that partially suppresses the tobacco programmed cell death induced by cell death-inducing proteins. The polypeptide is Secreted RxLR effector protein 63 (Plasmopara viticola (Downy mildew of grapevine)).